Reading from the N-terminus, the 312-residue chain is Ribonuclease HIII (312 aa).

The 217-residue stretch at 95 to 311 (FNCIGSDEAG…REKAQKILKP (217 aa)) folds into the RNase H type-2 domain. Asp-101, Glu-102, and Asp-206 together coordinate a divalent metal cation.

This sequence belongs to the RNase HII family. RnhC subfamily. Mn(2+) is required as a cofactor. Requires Mg(2+) as cofactor.

The protein localises to the cytoplasm. It carries out the reaction Endonucleolytic cleavage to 5'-phosphomonoester.. Endonuclease that specifically degrades the RNA of RNA-DNA hybrids. This is Ribonuclease HIII from Staphylococcus aureus (strain USA300).